Consider the following 352-residue polypeptide: MQSRAYALISEAALHHNLSGLSARAGTRLLLPVKANAYGHGLELIARQAAAHPDVWGLAVATPREAQAVALLNLGRPVVLLTPPTPDEVVPLADLGVRLPVSSLEEAEALPVHARAHLKVDTGMNRLGARPDEAIRIGQRLAERGVLEGAYTHFATTDEEDLSFAHEQLRRFRSVIAALPPVLAHCANGGGILSLGHLGDMGLSRPGLASYGFAPAHLQRVVPLTPVMTLRATVTQVHKAFAGESVSYGGLWQAPRDTTLATIGFGYADGYPRNATLRAHVLVRGERRPVVGRICMDQCMVDVTGLEVRAGDQVECWGSGDLTVSEVAGWGDTIEYEVLTGLGERVERVAVP.

Residue Lys34 is the Proton acceptor; specific for D-alanine of the active site. The residue at position 34 (Lys34) is an N6-(pyridoxal phosphate)lysine. Position 126 (Arg126) interacts with substrate. The active-site Proton acceptor; specific for L-alanine is Tyr248. Position 296 (Met296) interacts with substrate.

This sequence belongs to the alanine racemase family. It depends on pyridoxal 5'-phosphate as a cofactor.

It catalyses the reaction L-alanine = D-alanine. The protein operates within amino-acid biosynthesis; D-alanine biosynthesis; D-alanine from L-alanine: step 1/1. In terms of biological role, catalyzes the interconversion of L-alanine and D-alanine. May also act on other amino acids. The sequence is that of Alanine racemase (alr) from Deinococcus deserti (strain DSM 17065 / CIP 109153 / LMG 22923 / VCD115).